The primary structure comprises 484 residues: Regulator of G-protein signaling 9 (484 aa).

A DEP domain is found at 30–105 (PDTGVKTQSQ…PDSSLYRFQT (76 aa)). The G protein gamma domain occupies 219–280 (ITAVKKEIMY…ITDDTQFWDL (62 aa)). An RGS domain is found at 299–414 (NFSELIRDPK…LKSPIYKEML (116 aa)).

Heterodimer with Gbeta5. Interacts with RGS7BP, leading to regulate the subcellular location of the heterodimer formed with Gbeta5. Component of the RGS9-1-Gbeta5 complex composed of RGS9 (RGS9-1), Gbeta5 (GNB5) and RGS9BP. Post-translationally, phosphorylation is decreased by light exposition.

The protein localises to the membrane. Functionally, inhibits signal transduction by increasing the GTPase activity of G protein alpha subunits thereby driving them into their inactive GDP-bound form. Binds to G(t)-alpha. Involved in phototransduction; key element in the recovery phase of visual transduction. The sequence is that of Regulator of G-protein signaling 9 from Tamias striatus (Eastern chipmunk).